Consider the following 612-residue polypeptide: UvrABC system protein C (612 aa).

The GIY-YIG domain occupies 20-98 (THSGVYRMLD…IKQHRPKYNI (79 aa)). Positions 208 to 243 (SSVLEEISAKMYQASEDMEYEKAQVYRDQLVVLRKL) constitute a UVR domain.

Belongs to the UvrC family. In terms of assembly, interacts with UvrB in an incision complex.

The protein resides in the cytoplasm. Functionally, the UvrABC repair system catalyzes the recognition and processing of DNA lesions. UvrC both incises the 5' and 3' sides of the lesion. The N-terminal half is responsible for the 3' incision and the C-terminal half is responsible for the 5' incision. The polypeptide is UvrABC system protein C (Francisella tularensis subsp. tularensis (strain WY96-3418)).